Reading from the N-terminus, the 109-residue chain is Staphostatin B (109 aa).

The tract at residues 97 to 101 is binds to staphopain B; it reads IGTSR.

This sequence belongs to the protease inhibitor I57 (SspC) family. Forms a stable non-covalent complex with prematurely activated/folded SspB.

The protein resides in the cytoplasm. Specifically inhibits the cysteine protease staphopain B (SspB) by blocking the active site of the enzyme. Probably required to protect cytoplasmic proteins from being degraded by prematurely activated/folded prostaphopain B. Also involved in growth capacity, viability and bacterial morphology. In Staphylococcus aureus (strain NCTC 8325 / PS 47), this protein is Staphostatin B (sspC).